The following is a 391-amino-acid chain: Heme A synthase (391 aa).

Helical transmembrane passes span isoleucine 37–leucine 57, arginine 121–alanine 141, leucine 152–serine 172, leucine 186–leucine 206, threonine 229–isoleucine 249, phenylalanine 298–glycine 318, leucine 332–alanine 352, and tryptophan 354–alanine 374. Residue histidine 300 coordinates heme. Histidine 360 provides a ligand contact to heme.

This sequence belongs to the COX15/CtaA family. Type 2 subfamily. In terms of assembly, interacts with CtaB. Heme b serves as cofactor.

Its subcellular location is the cell membrane. It carries out the reaction Fe(II)-heme o + 2 A + H2O = Fe(II)-heme a + 2 AH2. Its pathway is porphyrin-containing compound metabolism; heme A biosynthesis; heme A from heme O: step 1/1. In terms of biological role, catalyzes the conversion of heme O to heme A by two successive hydroxylations of the methyl group at C8. The first hydroxylation forms heme I, the second hydroxylation results in an unstable dihydroxymethyl group, which spontaneously dehydrates, resulting in the formyl group of heme A. This Cereibacter sphaeroides (strain KD131 / KCTC 12085) (Rhodobacter sphaeroides) protein is Heme A synthase.